The primary structure comprises 825 residues: Glycerol-3-phosphate acyltransferase 1, mitochondrial (825 aa).

Topologically, residues 1–87 (MDESALTLGT…FFNPSIPSLG (87 aa)) are cytoplasmic. Residues 80–120 (NPSIPSLGLRNVIYINETHTRHRGWLARRLSYVLFIQERDV) are important for mitochondrial localization. An intramembrane segment occupies 88–118 (LRNVIYINETHTRHRGWLARRLSYVLFIQER). Topologically, residues 119–825 (DVHKGMFATN…LEYILSLVVL (707 aa)) are cytoplasmic. The HXXXXD motif signature appears at 230-235 (HRSHID). 5 residues coordinate CoA: R278, R279, K288, R293, and R328. S380 is subject to Phosphoserine. Positions 435 to 455 (SRPSGAADEGTDMSINESRNA) are disordered. R461 contacts CoA. 2 positions are modified to phosphoserine: S685 and S692. K777 and K781 each carry N6-acetyllysine.

This sequence belongs to the GPAT/DAPAT family. In terms of tissue distribution, highly expressed in adipose tissues and lung. Low expression in liver.

It is found in the mitochondrion outer membrane. The catalysed reaction is sn-glycerol 3-phosphate + an acyl-CoA = a 1-acyl-sn-glycero-3-phosphate + CoA. It carries out the reaction (9Z,12Z)-octadecadienoyl-CoA + sn-glycerol 3-phosphate = 1-(9Z,12Z)-octadecadienoyl-sn-glycero-3-phosphate + CoA. The enzyme catalyses sn-glycerol 3-phosphate + (9Z)-octadecenoyl-CoA = 1-(9Z-octadecenoyl)-sn-glycero-3-phosphate + CoA. It catalyses the reaction sn-glycerol 3-phosphate + octadecanoyl-CoA = 1-octadecanoyl-sn-glycero-3-phosphate + CoA. The catalysed reaction is sn-glycerol 3-phosphate + hexadecanoyl-CoA = 1-hexadecanoyl-sn-glycero-3-phosphate + CoA. It carries out the reaction dodecanoyl-CoA + sn-glycerol 3-phosphate = 1-dodecanoyl-sn-glycerol 3-phosphate + CoA. The enzyme catalyses 1-acyl-sn-glycero-3-phospho-(1'-sn-glycerol) + an acyl-CoA = a 1,2-diacyl-sn-glycero-3-phospho-(1'-sn-glycerol) + CoA. Its pathway is phospholipid metabolism; CDP-diacylglycerol biosynthesis; CDP-diacylglycerol from sn-glycerol 3-phosphate: step 1/3. Mitochondrial membrane protein that catalyzes the essential first step of biosynthesis of glycerolipids such as triglycerides, phosphatidic acids and lysophosphatidic acids. Esterifies acyl-group from acyl-coenzyme A (acyl-CoA) to the sn-1 position of glycerol-3-phosphate, to produce lysophosphatidic acid. Has a narrow hydrophobic binding cleft that selects for a linear acyl chain. Catalytic activity is higher for substrates with a 16-carbon acyl chain. The polypeptide is Glycerol-3-phosphate acyltransferase 1, mitochondrial (Bos taurus (Bovine)).